Reading from the N-terminus, the 143-residue chain is Large ribosomal subunit protein uL16 (143 aa).

The span at 1–14 (MLTPKRVKWRRQHR) shows a compositional bias: basic residues. A disordered region spans residues 1-23 (MLTPKRVKWRRQHRPDRAGKAKG).

Belongs to the universal ribosomal protein uL16 family. In terms of assembly, part of the 50S ribosomal subunit.

Its function is as follows. Binds 23S rRNA and is also seen to make contacts with the A and possibly P site tRNAs. The sequence is that of Large ribosomal subunit protein uL16 from Desulforudis audaxviator (strain MP104C).